The chain runs to 147 residues: Myosin-2 essential light chain (147 aa).

3 consecutive EF-hand domains span residues 7-42 (DQLAEFQEAFNLFDNRGDGKIQLSQVGECLRALGQN), 80-115 (DTADDFIEGLRHFDKDASGYISSAELRHLLTTLGEK), and 115-147 (KLTDEEVEQLLANMEDQQGNINYEEFVRMVMSG). Ser-30 is modified (phosphoserine). 5 residues coordinate Ca(2+): Asp-93, Asp-95, Ser-97, Tyr-99, and Glu-104.

In terms of assembly, myosin is a hexamer of 2 heavy chains and 4 light chains.

This Drosophila melanogaster (Fruit fly) protein is Myosin-2 essential light chain (Mlc-c).